A 229-amino-acid polypeptide reads, in one-letter code: ATP-dependent dethiobiotin synthetase BioD (229 aa).

Position 15 to 20 (E15 to L20) interacts with ATP. T19 is a binding site for Mg(2+). K40 is an active-site residue. ATP-binding positions include D57, E118 to G121, and P207 to L209. Mg(2+) is bound by residues D57 and E118.

This sequence belongs to the dethiobiotin synthetase family. Homodimer. Mg(2+) is required as a cofactor.

The protein resides in the cytoplasm. It carries out the reaction (7R,8S)-7,8-diammoniononanoate + CO2 + ATP = (4R,5S)-dethiobiotin + ADP + phosphate + 3 H(+). It functions in the pathway cofactor biosynthesis; biotin biosynthesis; biotin from 7,8-diaminononanoate: step 1/2. Catalyzes a mechanistically unusual reaction, the ATP-dependent insertion of CO2 between the N7 and N8 nitrogen atoms of 7,8-diaminopelargonic acid (DAPA, also called 7,8-diammoniononanoate) to form a ureido ring. The polypeptide is ATP-dependent dethiobiotin synthetase BioD (Ralstonia nicotianae (strain ATCC BAA-1114 / GMI1000) (Ralstonia solanacearum)).